Reading from the N-terminus, the 183-residue chain is Adenine phosphoribosyltransferase (183 aa).

The protein belongs to the purine/pyrimidine phosphoribosyltransferase family. Homodimer.

It localises to the cytoplasm. It carries out the reaction AMP + diphosphate = 5-phospho-alpha-D-ribose 1-diphosphate + adenine. Its pathway is purine metabolism; AMP biosynthesis via salvage pathway; AMP from adenine: step 1/1. In terms of biological role, catalyzes a salvage reaction resulting in the formation of AMP, that is energically less costly than de novo synthesis. This Blochmanniella floridana protein is Adenine phosphoribosyltransferase.